Reading from the N-terminus, the 107-residue chain is Small leucine-rich protein 1 (107 aa).

The next 2 helical transmembrane spans lie at 19 to 39 (AALV…LAMS) and 53 to 73 (FLFF…IAYF). Positions 85-107 (SQNCDRQHNPKDGSSLYQRMKWT) are disordered.

It is found in the membrane. The protein is Small leucine-rich protein 1 (SMLR1) of Homo sapiens (Human).